The sequence spans 318 residues: MADACSEMDRGAEKYPLLGFGQAVIGPPGSGKSTYVRAMQALLARMGRKSAIINLDPAGEDEPGAAVSLRELLGLEEVMSELRLGPNGSLLYCMEYLQENLDWLRARLQGLRGTYLLLDCPGQVELYTHHPALPDILRRLGGWGLRLCAVHLVDSHYCTDPAKFISVLCTSLSTMLHVELPHINVLSKMDLIEQYGRLAFNLDYYTEVMDLSFLVEQLTSDPFFRRHKRLHEKLAGVIEDYGLVTFMPLSIKDDKSLQLVLSAVDKASGFCFGEAKQSLGNLMSVAVGADFQFTSTLAFQEKYVENDGRTVEEETLDL.

29-34 (GSGKST) lines the GTP pocket. The Gly-Pro-Asn (GPN)-loop; involved in dimer interface signature appears at 85 to 87 (GPN). 187–190 (SKMD) provides a ligand contact to GTP.

The protein belongs to the GPN-loop GTPase family. In terms of assembly, heterodimers with gpn1 or gpn3. Binds to RNA polymerase II (RNAPII).

Its function is as follows. Small GTPase required for proper localization of RNA polymerase II and III (RNAPII and RNAPIII). May act at an RNAP assembly step prior to nuclear import. The polypeptide is GPN-loop GTPase 2 (Xenopus laevis (African clawed frog)).